Consider the following 243-residue polypeptide: uncharacterized protein (243 aa).

It belongs to the ycf23 family.

It is found in the plastid. It localises to the cyanelle. This is an uncharacterized protein from Cyanophora paradoxa.